Reading from the N-terminus, the 125-residue chain is Large ribosomal subunit protein bL12 (125 aa).

Belongs to the bacterial ribosomal protein bL12 family. As to quaternary structure, homodimer. Part of the ribosomal stalk of the 50S ribosomal subunit. Forms a multimeric L10(L12)X complex, where L10 forms an elongated spine to which 2 to 4 L12 dimers bind in a sequential fashion. Binds GTP-bound translation factors.

Functionally, forms part of the ribosomal stalk which helps the ribosome interact with GTP-bound translation factors. Is thus essential for accurate translation. This Campylobacter jejuni (strain RM1221) protein is Large ribosomal subunit protein bL12.